The following is a 473-amino-acid chain: ATP synthase subunit beta, chloroplastic (473 aa).

An ATP-binding site is contributed by 172 to 179; sequence GGAGVGKT.

It belongs to the ATPase alpha/beta chains family. F-type ATPases have 2 components, CF(1) - the catalytic core - and CF(0) - the membrane proton channel. CF(1) has five subunits: alpha(3), beta(3), gamma(1), delta(1), epsilon(1). CF(0) has four main subunits: a(1), b(1), b'(1) and c(9-12).

Its subcellular location is the plastid. It is found in the chloroplast thylakoid membrane. The enzyme catalyses ATP + H2O + 4 H(+)(in) = ADP + phosphate + 5 H(+)(out). Produces ATP from ADP in the presence of a proton gradient across the membrane. The catalytic sites are hosted primarily by the beta subunits. The chain is ATP synthase subunit beta, chloroplastic from Equisetum arvense (Field horsetail).